A 169-amino-acid polypeptide reads, in one-letter code: MYNVGKIVNTHGLIGEIRVIATTDFPEERFQVGNTVYLFEKNSKKPEKLIIRSHRKHKNFDLLMFEGFTGIHQVERMKEGVLKIKEAQLTDLEENEFYFHEIIGCIVVTTDGEELGEITEILTPGANDVWVVKGSDKKEKLIPYIADVVKEININDKKITIEVMEGLLD.

Residues 94–167 enclose the PRC barrel domain; sequence ENEFYFHEII…KITIEVMEGL (74 aa).

It belongs to the RimM family. In terms of assembly, binds ribosomal protein uS19.

The protein resides in the cytoplasm. An accessory protein needed during the final step in the assembly of 30S ribosomal subunit, possibly for assembly of the head region. Essential for efficient processing of 16S rRNA. May be needed both before and after RbfA during the maturation of 16S rRNA. It has affinity for free ribosomal 30S subunits but not for 70S ribosomes. The polypeptide is Ribosome maturation factor RimM (Listeria monocytogenes serotype 4b (strain F2365)).